The chain runs to 484 residues: Phosphomethylpyrimidine synthase (484 aa).

Substrate is bound by residues Asn-97, Met-126, Tyr-156, His-192, 212-214 (SRG), 253-256 (DSLR), and Glu-292. His-296 is a Zn(2+) binding site. Tyr-319 contributes to the substrate binding site. His-360 is a binding site for Zn(2+). 3 residues coordinate [4Fe-4S] cluster: Cys-440, Cys-443, and Cys-448.

Belongs to the ThiC family. Requires [4Fe-4S] cluster as cofactor.

The enzyme catalyses 5-amino-1-(5-phospho-beta-D-ribosyl)imidazole + S-adenosyl-L-methionine = 4-amino-2-methyl-5-(phosphooxymethyl)pyrimidine + CO + 5'-deoxyadenosine + formate + L-methionine + 3 H(+). The protein operates within cofactor biosynthesis; thiamine diphosphate biosynthesis. Its function is as follows. Catalyzes the synthesis of the hydroxymethylpyrimidine phosphate (HMP-P) moiety of thiamine from aminoimidazole ribotide (AIR) in a radical S-adenosyl-L-methionine (SAM)-dependent reaction. The chain is Phosphomethylpyrimidine synthase from Synechococcus sp. (strain CC9605).